The primary structure comprises 228 residues: Orotidine 5'-phosphate decarboxylase (228 aa).

Substrate is bound by residues aspartate 11, lysine 33, 60–69, threonine 117, arginine 178, glutamine 186, glycine 206, and arginine 207; that span reads DLKLHDIPNT. Residue lysine 62 is the Proton donor of the active site.

This sequence belongs to the OMP decarboxylase family. Type 1 subfamily. As to quaternary structure, homodimer.

It catalyses the reaction orotidine 5'-phosphate + H(+) = UMP + CO2. Its pathway is pyrimidine metabolism; UMP biosynthesis via de novo pathway; UMP from orotate: step 2/2. In terms of biological role, catalyzes the decarboxylation of orotidine 5'-monophosphate (OMP) to uridine 5'-monophosphate (UMP). The protein is Orotidine 5'-phosphate decarboxylase of Ehrlichia canis (strain Jake).